The sequence spans 143 residues: uncharacterized protein (143 aa).

The protein resides in the mitochondrion. This is an uncharacterized protein from Arabidopsis thaliana (Mouse-ear cress).